Consider the following 382-residue polypeptide: D-galactonate dehydratase (382 aa).

A Mg(2+)-binding site is contributed by aspartate 183. Histidine 185 functions as the Proton donor in the catalytic mechanism. Mg(2+) contacts are provided by glutamate 209 and glutamate 235. Residue histidine 285 is the Proton acceptor of the active site.

The protein belongs to the mandelate racemase/muconate lactonizing enzyme family. GalD subfamily. Mg(2+) is required as a cofactor.

It carries out the reaction D-galactonate = 2-dehydro-3-deoxy-D-galactonate + H2O. It functions in the pathway carbohydrate acid metabolism; D-galactonate degradation; D-glyceraldehyde 3-phosphate and pyruvate from D-galactonate: step 1/3. Catalyzes the dehydration of D-galactonate to 2-keto-3-deoxy-D-galactonate. The chain is D-galactonate dehydratase from Salmonella paratyphi A (strain AKU_12601).